The primary structure comprises 57 residues: FLVLLLVSLMCYAEIAEGSQPTECKYGRPCNSDRDCCWEYRCLSSGREYTCKQDPGP.

A signal peptide spans 1–13 (FLVLLLVSLMCYA). Residues 14-18 (EIAEG) constitute a propeptide that is removed on maturation. 3 cysteine pairs are disulfide-bonded: cysteine 24-cysteine 37, cysteine 30-cysteine 42, and cysteine 36-cysteine 51.

It belongs to the scorpion calcin-like family. KTX subfamily. In terms of tissue distribution, expressed by the venom gland.

The protein localises to the secreted. Functionally, this recombinant peptide inhibits voltage-gated potassium channels mKv1.3/KCNA3 (IC(50)=1.70 uM), mKv1.1/KCNA1 (10 uM inhibits 40% of currents) and hKv1.2/KCNA2 (10 uM inhibits 42% of currents). May also increase intracellular calcium release through the activation of nuclear inositol 1,4,5-trisphosphate receptors (ITPR) of cardiomyocytes, thereby causing an increase in the contraction frequency of these cells. In Isometrus maculatus (Lesser brown scorpion), this protein is Potassium channel toxin KTx1.